The chain runs to 200 residues: Urease accessory protein UreG (200 aa).

11–18 (GPVGSGKT) contributes to the GTP binding site.

It belongs to the SIMIBI class G3E GTPase family. UreG subfamily. In terms of assembly, homodimer. UreD, UreF and UreG form a complex that acts as a GTP-hydrolysis-dependent molecular chaperone, activating the urease apoprotein by helping to assemble the nickel containing metallocenter of UreC. The UreE protein probably delivers the nickel.

Its subcellular location is the cytoplasm. Functionally, facilitates the functional incorporation of the urease nickel metallocenter. This process requires GTP hydrolysis, probably effectuated by UreG. In Thermosynechococcus vestitus (strain NIES-2133 / IAM M-273 / BP-1), this protein is Urease accessory protein UreG.